A 444-amino-acid chain; its full sequence is Endoglucanase N (444 aa).

The first 31 residues, 1–31 (MWMRRNQIVRKLTLGVVTTVLGMSLSFSALS), serve as a signal peptide directing secretion. Substrate-binding positions include His64, 68-69 (WF), Tyr95, and His130. Glu168 acts as the Proton donor in catalysis. Substrate is bound at residue Tyr230. Residue Glu256 is the Nucleophile of the active site. Residues 262–263 (AS), Trp290, and 295–297 (KSE) contribute to the substrate site. Positions 332 to 358 (ANLGGGDTPTTPTTPTEPTNPGNGTTG) are disordered. Residues 339–358 (TPTTPTTPTEPTNPGNGTTG) are compositionally biased toward low complexity. The CBM3 domain maps to 356-444 (TTGDVVLQYR…DKANRYVLVT (89 aa)).

It belongs to the glycosyl hydrolase 5 (cellulase A) family.

Its subcellular location is the secreted. The enzyme catalyses Endohydrolysis of (1-&gt;4)-beta-D-glucosidic linkages in cellulose, lichenin and cereal beta-D-glucans.. In Pectobacterium atrosepticum (Erwinia carotovora subsp. atroseptica), this protein is Endoglucanase N (celN).